The chain runs to 210 residues: Probable GTP-binding protein EngB (210 aa).

The 175-residue stretch at 25 to 199 folds into the EngB-type G domain; sequence TGIEVAFAGR…RQKLDTWFSE (175 aa). GTP-binding positions include 33–40, 60–64, 78–81, 145–148, and 178–180; these read GRSNAGKS, GRTQL, DLPG, TKAD, and FSS. The Mg(2+) site is built by Ser40 and Thr62.

Belongs to the TRAFAC class TrmE-Era-EngA-EngB-Septin-like GTPase superfamily. EngB GTPase family. Mg(2+) is required as a cofactor.

Functionally, necessary for normal cell division and for the maintenance of normal septation. This is Probable GTP-binding protein EngB from Escherichia coli O6:H1 (strain CFT073 / ATCC 700928 / UPEC).